Consider the following 303-residue polypeptide: Glycine--tRNA ligase alpha subunit (303 aa).

The protein belongs to the class-II aminoacyl-tRNA synthetase family. Tetramer of two alpha and two beta subunits.

It localises to the cytoplasm. The enzyme catalyses tRNA(Gly) + glycine + ATP = glycyl-tRNA(Gly) + AMP + diphosphate. The chain is Glycine--tRNA ligase alpha subunit from Salmonella paratyphi A (strain ATCC 9150 / SARB42).